The following is a 172-amino-acid chain: uncharacterized protein (172 aa).

Basic and acidic residues predominate over residues 1–17; sequence MISLDKDENEIEHHNEE. The segment at 1-27 is disordered; the sequence is MISLDKDENEIEHHNEENSLVEQETAP. The chain crosses the membrane as a helical span at residues 129–151; it reads IVTVLIGIIVAIFVLVVIGIAAF.

It localises to the membrane. This is an uncharacterized protein from Bacillus subtilis (strain 168).